The sequence spans 447 residues: Glutamine synthetase (447 aa).

The GS beta-grasp domain occupies 20 to 105 (RDVKFIRTQF…ILGDVYLPDG (86 aa)). The GS catalytic domain maps to 112–447 (PRYVLKTAIK…WELSRYLSML (336 aa)). The Mg(2+) site is built by Glu135 and Glu137. Residue Glu187 coordinates ATP. 2 residues coordinate Mg(2+): Glu192 and Glu199. L-glutamate-binding positions include 243-244 (NG) and Gly244. His248 provides a ligand contact to Mg(2+). Ser252 contributes to the ATP binding site. Residues Arg301, Glu307, and Arg319 each coordinate L-glutamate. Arg319 and Arg324 together coordinate ATP. Glu336 lines the Mg(2+) pocket. L-glutamate is bound at residue Arg338.

It belongs to the glutamine synthetase family. As to quaternary structure, homohexamer. Interacts and forms stable complexes with the regulatory protein GlnK1. Mg(2+) is required as a cofactor.

It is found in the cytoplasm. It carries out the reaction L-glutamate + NH4(+) + ATP = L-glutamine + ADP + phosphate + H(+). With respect to regulation, directly stimulated by the effector molecule 2-oxoglutarate. Inhibited by GlnK1. 2-oxoglutarate antagonizes the inhibitory effects of GlnK1, but does not prevent GlnK1/GlnA1 complex formation. Probably involved in nitrogen metabolism via ammonium assimilation. Catalyzes the ATP-dependent biosynthesis of glutamine from glutamate and ammonia. The protein is Glutamine synthetase of Methanosarcina mazei (strain ATCC BAA-159 / DSM 3647 / Goe1 / Go1 / JCM 11833 / OCM 88) (Methanosarcina frisia).